The following is a 331-amino-acid chain: MAVRKPPITTREYWAPGHAACAGCGCAIALKLATKAFSEAMEEKYGDPNAFAIAQATGCMEVVSAVFPYTAWKVPWIHVAFENAAAAASGVEAAWKKLGIKGKILAIGGDGGTADIGLQALSGMLERGHNVVYLMYDNEAYMNTGIQRSSSTPYGAWTTTSPPGKYSIGEDRPKKWVALIAAAHQIPYAATASIGNPFDLVKKVKKAAKVDGPAFIQVHCTCPTGWRTPLEKGVEIARLAIETGMWPLFEIENGDIWNIKIQPPGGGAKVYKEGGRVVRIEFKKPIEEYLKYQGRFKHLFKRPEAIEELRNQIKAMWKVLGVEAILPRPEE.

Cys-21, Cys-24, Cys-59, and Cys-222 together coordinate [4Fe-4S] cluster.

As to quaternary structure, heterotetramer of one alpha, one beta, one delta and one gamma chain. The cofactor is [4Fe-4S] cluster.

The enzyme catalyses 2 oxidized [2Fe-2S]-[ferredoxin] + pyruvate + CoA = 2 reduced [2Fe-2S]-[ferredoxin] + acetyl-CoA + CO2 + H(+). The sequence is that of Pyruvate synthase subunit PorB (porB) from Pyrococcus horikoshii (strain ATCC 700860 / DSM 12428 / JCM 9974 / NBRC 100139 / OT-3).